The chain runs to 434 residues: Methylenetetrahydrofolate--tRNA-(uracil-5-)-methyltransferase TrmFO (434 aa).

Residue 10-15 (GAGLAG) coordinates FAD.

Belongs to the MnmG family. TrmFO subfamily. It depends on FAD as a cofactor.

It is found in the cytoplasm. The catalysed reaction is uridine(54) in tRNA + (6R)-5,10-methylene-5,6,7,8-tetrahydrofolate + NADH + H(+) = 5-methyluridine(54) in tRNA + (6S)-5,6,7,8-tetrahydrofolate + NAD(+). It carries out the reaction uridine(54) in tRNA + (6R)-5,10-methylene-5,6,7,8-tetrahydrofolate + NADPH + H(+) = 5-methyluridine(54) in tRNA + (6S)-5,6,7,8-tetrahydrofolate + NADP(+). In terms of biological role, catalyzes the folate-dependent formation of 5-methyl-uridine at position 54 (M-5-U54) in all tRNAs. The polypeptide is Methylenetetrahydrofolate--tRNA-(uracil-5-)-methyltransferase TrmFO (Bacillus anthracis (strain A0248)).